Consider the following 255-residue polypeptide: Indole-3-glycerol phosphate synthase (255 aa).

The protein belongs to the TrpC family.

The enzyme catalyses 1-(2-carboxyphenylamino)-1-deoxy-D-ribulose 5-phosphate + H(+) = (1S,2R)-1-C-(indol-3-yl)glycerol 3-phosphate + CO2 + H2O. It functions in the pathway amino-acid biosynthesis; L-tryptophan biosynthesis; L-tryptophan from chorismate: step 4/5. The polypeptide is Indole-3-glycerol phosphate synthase (Streptococcus pneumoniae (strain Hungary19A-6)).